A 289-amino-acid polypeptide reads, in one-letter code: Rhodopsin (289 aa).

Residues 1–7 (YLVSPAA) are Extracellular-facing. A helical transmembrane segment spans residues 8–32 (YAALGAYMFLLILIGFPVNFLTLYV). At 33–44 (TLEHKKLRTPLN) the chain is on the cytoplasmic side. Residues 45 to 67 (YILLNLAVADLFMVLGGFTTTMY) form a helical membrane-spanning segment. Residues 68–81 (TSMHGYFVLGRLGC) are Extracellular-facing. The cysteines at positions 81 and 158 are disulfide-linked. A helical transmembrane segment spans residues 82–104 (NLEGFFATLGGEIALWSLVVLAI). The 'Ionic lock' involved in activated form stabilization signature appears at 105–107 (ERW). Topologically, residues 105 to 123 (ERWIVVCKPISKFRFTEDN) are cytoplasmic. The helical transmembrane segment at 124–144 (AIMGLAFSWVMALACAVPPLV) threads the bilayer. Topologically, residues 145–173 (GWLRYIPEGMQCTCGVDYYTRAEGFDNES) are extracellular. An N-linked (GlcNAc...) asparagine glycan is attached at Asn171. A helical membrane pass occupies residues 174–195 (FVIYMFIVHFLIPLSVIFFCYG). Topologically, residues 196-223 (RLLCAVKEAAAAQQESETTQRAEKEVSR) are cytoplasmic. A helical membrane pass occupies residues 224-245 (MVVIMVIGFLVCWLPYASVAWW). The Extracellular portion of the chain corresponds to 246–257 (IFCNQGSDFGPI). Residues 258–279 (FMTLPSFFAKRPAIYNPMIYIC) form a helical membrane-spanning segment. N6-(retinylidene)lysine is present on Lys267. Residues 280–289 (MNKQFRHCMI) lie on the Cytoplasmic side of the membrane.

It belongs to the G-protein coupled receptor 1 family. Opsin subfamily. Post-translationally, phosphorylated on some or all of the serine and threonine residues present in the C-terminal region. Contains one covalently linked retinal chromophore.

It is found in the membrane. The protein resides in the cell projection. It localises to the cilium. Its subcellular location is the photoreceptor outer segment. Its function is as follows. Photoreceptor required for image-forming vision at low light intensity. While most salt water fish species use retinal as chromophore, most freshwater fish use 3-dehydroretinal, or a mixture of retinal and 3-dehydroretinal. Light-induced isomerization of 11-cis to all-trans retinal triggers a conformational change that activates signaling via G-proteins. Subsequent receptor phosphorylation mediates displacement of the bound G-protein alpha subunit by arrestin and terminates signaling. The sequence is that of Rhodopsin (rho) from Batrachocottus nikolskii (Fat sculpin).